An 830-amino-acid polypeptide reads, in one-letter code: Cyclin-dependent kinase inhibitor FAR1 (830 aa).

Residues 1-31 (MKTPTRVSFEKKIHTPPSGDRDAERSPPKKF) form a disordered region. Positions 8–27 (SFEKKIHTPPSGDRDAERSP) are enriched in basic and acidic residues. At S87 the chain carries Phosphoserine; by CDC28. A phosphoserine mark is found at S110 and S114. The RING-type zinc-finger motif lies at 202–252 (CLICEESISSTFTGEKVVESTCSHTSHYNCYLMLFETLYFQGKFPECKICG). At T306 the chain carries Phosphothreonine.

As to quaternary structure, associates with the CDC28-CLN complex. Thought to be phosphorylated by MAP kinase FUS3. Thought to enhance the binding of FAR1 to G1-specific cyclin-dependent kinase (CDK) complexes.

Its function is as follows. Inhibitor of the cyclin-dependent kinase CDC28. Necessary for cell cycle arrest. Involved in pheromone response. Contributes to mating efficiency. Required for oriented polarization of yeast cells in response to mating pheromones. The protein is Cyclin-dependent kinase inhibitor FAR1 (FAR1) of Saccharomyces cerevisiae (strain ATCC 204508 / S288c) (Baker's yeast).